The chain runs to 262 residues: Type III pantothenate kinase (262 aa).

Position 5 to 12 (5 to 12 (DAGNTRSK)) interacts with ATP. Residues tyrosine 102 and 110 to 113 (GSDR) contribute to the substrate site. The active-site Proton acceptor is the aspartate 112. Aspartate 132 contacts K(+). Threonine 135 is an ATP binding site. Substrate is bound at residue threonine 190.

Belongs to the type III pantothenate kinase family. In terms of assembly, homodimer. NH4(+) serves as cofactor. K(+) is required as a cofactor.

The protein resides in the cytoplasm. The enzyme catalyses (R)-pantothenate + ATP = (R)-4'-phosphopantothenate + ADP + H(+). It functions in the pathway cofactor biosynthesis; coenzyme A biosynthesis; CoA from (R)-pantothenate: step 1/5. Functionally, catalyzes the phosphorylation of pantothenate (Pan), the first step in CoA biosynthesis. This is Type III pantothenate kinase from Idiomarina loihiensis (strain ATCC BAA-735 / DSM 15497 / L2-TR).